The primary structure comprises 459 residues: UDP-N-acetylmuramoylalanine--D-glutamate ligase (459 aa).

An ATP-binding site is contributed by 119-125; it reads GTNGKTT.

It belongs to the MurCDEF family.

It localises to the cytoplasm. It carries out the reaction UDP-N-acetyl-alpha-D-muramoyl-L-alanine + D-glutamate + ATP = UDP-N-acetyl-alpha-D-muramoyl-L-alanyl-D-glutamate + ADP + phosphate + H(+). Its pathway is cell wall biogenesis; peptidoglycan biosynthesis. Its function is as follows. Cell wall formation. Catalyzes the addition of glutamate to the nucleotide precursor UDP-N-acetylmuramoyl-L-alanine (UMA). This is UDP-N-acetylmuramoylalanine--D-glutamate ligase from Lacticaseibacillus casei (strain BL23) (Lactobacillus casei).